We begin with the raw amino-acid sequence, 2151 residues long: Polycystin-1-like protein 3 (2151 aa).

A signal peptide spans 1 to 20 (MLLQRRSWLWLYIRIGVILG). Topologically, residues 25–1073 (RKPSIREQHG…IKLLLHVTNN (1049 aa)) are extracellular. Residues 34–142 (GGNSCYQLNR…CIEKHHFICQ (109 aa)) enclose the C-type lectin domain. 2 disulfide bridges follow: cysteine 55/cysteine 141 and cysteine 116/cysteine 133. A glycan (N-linked (GlcNAc...) asparagine) is linked at asparagine 89. Positions 222–245 (SLTGRPQVTSDTLASSSPPQGTSD) are enriched in polar residues. The disordered stretch occupies residues 222-609 (SLTGRPQVTS…SSSPPWPVIT (388 aa)). The segment covering 246–348 (TPASSSPPQV…ASSSPPQGTS (103 aa)) has biased composition (low complexity). Composition is skewed to polar residues over residues 349–363 (DTPA…TLDT) and 371–600 (QGTS…TPAS). N-linked (GlcNAc...) asparagine glycosylation is found at asparagine 566, asparagine 579, asparagine 592, asparagine 913, and asparagine 951. Residues 899-1061 (TSLNTSTDHF…FIVPRTVDVE (163 aa)) form the GAIN-B domain. 2 disulfides stabilise this stretch: cysteine 1011–cysteine 1039 and cysteine 1026–cysteine 1041. A GPS region spans residues 1011-1061 (CYFWDRYNRTWKSDGCQVGPKSTILKTQCLCDHLTFFSSDFFIVPRTVDVE). The stachel stretch occupies residues 1045 to 1061 (TFFSSDFFIVPRTVDVE). The chain crosses the membrane as a helical span at residues 1074 to 1094 (PVGVSLLSSLLGFYILLAMWA). Residues 1095 to 1283 (SRKDREDMQK…NQFTRVQRLS (189 aa)) are Cytoplasmic-facing. The 118-residue stretch at 1119–1236 (SHYLIQVYTG…GNCERDRVFT (118 aa)) folds into the PLAT domain. Residues 1284 to 1304 (CCMALLLCDMVINIMFWKMGG) form a helical membrane-spanning segment. Topologically, residues 1305-1320 (TTAKRGTEQLGPLAVT) are extracellular. The helical transmembrane segment at 1321-1341 (LSELLVSIQTSIILFPIHLIF) threads the bilayer. Topologically, residues 1342–1533 (GRLFQLIHPP…FCLFRWLKCS (192 aa)) are cytoplasmic. The helical transmembrane segment at 1534-1554 (CWLLLGVISLASAFFITLYSL) threads the bilayer. Over 1555–1575 (ELDKDQATSWVISMMLSVLQD) the chain is Extracellular. A helical transmembrane segment spans residues 1576–1596 (IFISQPIKVIFLTLLFSLMAN). The Cytoplasmic portion of the chain corresponds to 1597–1665 (HMPWLNKDKE…KLTGGTLVQI (69 aa)). A helical membrane pass occupies residues 1666–1676 (LFLTLLMTTVY). Over 1677 to 1892 (SAKDSSRFFL…SLTSLQSSER (216 aa)) the chain is Extracellular. N-linked (GlcNAc) asparagine glycosylation is found at asparagine 1712 and asparagine 1822. Residues 1893-1921 (GFAWIVSQVVYYLLVCYYAFIQGCRLKRQ) traverse the membrane as a helical segment. At 1922 to 1930 (RLAFFTRKR) the chain is on the cytoplasmic side. Residues 1931–1949 (NLLDTSIVLISFSILGLSM) traverse the membrane as a helical segment. The Extracellular segment spans residues 1950–1980 (QSLSLLHKKMQQYHCDRDRFISFYEALRVNS). Residues 1981–2002 (AVTHLRGFLLLFATVRVWDLLR) traverse the membrane as a helical segment. Over 2003–2019 (HHAQLQVINKTLSKAWD) the chain is Cytoplasmic. The helical transmembrane segment at 2020 to 2044 (EVLGFILIIVVLLSSYAMTFNLLFG) threads the bilayer. A channel pore-region region spans residues 2043–2081 (FGWSISDYQSFFRSIVTVVGLLMGTSKHKEVIALYPILG). The Extracellular segment spans residues 2045-2077 (WSISDYQSFFRSIVTVVGLLMGTSKHKEVIALY). The helical transmembrane segment at 2078–2097 (PILGSLLVLSSIILMGLVII) threads the bilayer. Residues 2098 to 2151 (NLFVSAILIAFGKERKACEKEATLTDMLLQKLSSLLGIRLHQNPSEEHADNTGY) are Cytoplasmic-facing.

It belongs to the polycystin family. In terms of assembly, heterotetramer with PKD2L1, composed of 3 subunit of PKD2L1 and 1 subunit of PKD1L3. In terms of processing, autoproteolytically processed at the GPS region of the GAIN-B domain; this cleavage modulates receptor activity. In terms of tissue distribution, expressed in a subset of taste receptor cells (type III taste cells) distinct from those involved in bitter, sweet and umami taste. Expressed in circumvallate and foliate taste buds, but not in surrounding non-gustatory lingual epithelium cells. Expressed in testis.

It is found in the cell membrane. It catalyses the reaction Ca(2+)(in) = Ca(2+)(out). The enzyme catalyses Na(+)(in) = Na(+)(out). The catalysed reaction is K(+)(in) = K(+)(out). It carries out the reaction Mg(2+)(in) = Mg(2+)(out). Its activity is regulated as follows. The non-selective cation channel is gated following an off-response property by acid: gated open after the removal of acid stimulus, but not during acid application. Non-selective cation channel activity is inhibited by capsaicin. Regulation of non-selective cation channel activity by external Ca(2+) is bimodal, first sensitizing and subsequently inactivating the current. The apo (closed) heterotetramer has an asymmetric selectivity filter (SF) guarded by Lys-2069 in absence of Ca(2+). However, Ca(2+)-entrance to the SF vestibule is accompanied by a swing motion of Lys-2069 on PKD1L3. Functionally, pore-forming subunit of a heterotetrameric, non-selective cation channel that is permeable to Ca(2+). Also shows permeability towards NA(1+), K(+) and Mg(2+). Heterotetrameric complex channel is activated by external low pH and Ca(2+), but opens only when the extracellular pH rises again and after the removal of acid stimulus. May act as a sour taste receptor in gustatory cells; however, its contribution to sour taste perception is unclear in vivo and may be indirect. The polypeptide is Polycystin-1-like protein 3 (Mus musculus (Mouse)).